The chain runs to 775 residues: Dipeptidyl peptidase 4 (775 aa).

The signal sequence occupies residues 1 to 15 (MKLLSLLMLAGIAQA). N-linked (GlcNAc...) asparagine glycans are attached at residues Asn-81, Asn-111, Asn-154, and Asn-219. Catalysis depends on charge relay system residues Ser-613, Asp-690, and His-725.

Belongs to the peptidase S9B family.

It localises to the secreted. It carries out the reaction Release of an N-terminal dipeptide, Xaa-Yaa-|-Zaa-, from a polypeptide, preferentially when Yaa is Pro, provided Zaa is neither Pro nor hydroxyproline.. Its function is as follows. Extracellular dipeptidyl-peptidase which removes N-terminal dipeptides sequentially from polypeptides having unsubstituted N-termini provided that the penultimate residue is proline. Contributes to pathogenicity. The polypeptide is Dipeptidyl peptidase 4 (DPP4) (Trichophyton rubrum (Athlete's foot fungus)).